Here is a 1774-residue protein sequence, read N- to C-terminus: U3 small nucleolar RNA-associated protein 10 (1774 aa).

Positions 1206–1226 (YDKHSSAGSNDEEAGSESEAE) are disordered. The segment covering 1215-1226 (NDEEAGSESEAE) has biased composition (acidic residues). The HEAT repeat unit spans residues 1734 to 1772 (LVPIIAELLEDEDEEVEYEVRSGLVKVVESVMGEPFDRY).

This sequence belongs to the HEATR1/UTP10 family. As to quaternary structure, component of the ribosomal small subunit (SSU) processome.

Its subcellular location is the nucleus. It is found in the nucleolus. Involved in nucleolar processing of pre-18S ribosomal RNA. Involved in ribosome biosynthesis. In Kluyveromyces lactis (strain ATCC 8585 / CBS 2359 / DSM 70799 / NBRC 1267 / NRRL Y-1140 / WM37) (Yeast), this protein is U3 small nucleolar RNA-associated protein 10.